The primary structure comprises 474 residues: Homocitrate synthase, mitochondrial (474 aa).

A Pyruvate carboxyltransferase domain is found at 67-320 (FQIIESTLRE…KSKYKLEKLK (254 aa)). Arginine 75 provides a ligand contact to 2-oxoglutarate. Residue glutamate 76 participates in Mg(2+) binding. 2-oxoglutarate is bound by residues histidine 135, arginine 195, and threonine 229. Mg(2+)-binding residues include histidine 256 and histidine 258. Histidine 353 acts as the Proton acceptor in catalysis.

Belongs to the alpha-IPM synthase/homocitrate synthase family. Homocitrate synthase LYS20/LYS21 subfamily. Requires Mg(2+) as cofactor. It depends on Mn(2+) as a cofactor.

The protein resides in the mitochondrion. It carries out the reaction acetyl-CoA + 2-oxoglutarate + H2O = (2R)-homocitrate + CoA + H(+). It participates in amino-acid biosynthesis; L-lysine biosynthesis via AAA pathway; L-alpha-aminoadipate from 2-oxoglutarate: step 1/5. Its function is as follows. Catalyzes the aldol-type condensation of 2-oxoglutarate with acetyl-CoA to yield homocitrate. Carries out the first step of the alpha-aminoadipate (AAA) lysine biosynthesis pathway. This Penicillium rubens (strain ATCC 28089 / DSM 1075 / NRRL 1951 / Wisconsin 54-1255) (Penicillium chrysogenum) protein is Homocitrate synthase, mitochondrial (lys1).